Consider the following 520-residue polypeptide: EGF domain-specific O-linked N-acetylglucosamine transferase (520 aa).

The first 16 residues, 1–16, serve as a signal peptide directing secretion; sequence MPILPILIGILHLSLA. 3 N-linked (GlcNAc...) asparagine glycosylation sites follow: Asn52, Asn176, and Asn250. The Required for optimal activity signature appears at 292 to 294; it reads DVE. N-linked (GlcNAc...) asparagine glycosylation is present at Asn479. A Prevents secretion from ER motif is present at residues 517-520; that stretch reads RNEL.

The cofactor is a divalent metal cation.

It is found in the endoplasmic reticulum lumen. The enzyme catalyses L-seryl-[protein] + UDP-N-acetyl-alpha-D-glucosamine = 3-O-(N-acetyl-beta-D-glucosaminyl)-L-seryl-[protein] + UDP + H(+). The catalysed reaction is L-threonyl-[protein] + UDP-N-acetyl-alpha-D-glucosamine = 3-O-(N-acetyl-beta-D-glucosaminyl)-L-threonyl-[protein] + UDP + H(+). Catalyzes the transfer of a single N-acetylglucosamine from UDP-GlcNAc to a serine or threonine residue in extracellular proteins resulting in their modification with a beta-linked N-acetylglucosamine (O-GlcNAc). Specifically glycosylates the Thr residue located between the fifth and sixth conserved cysteines of folded EGF-like domains. Involved in epithelial cell adhesion/interaction with the extracellular matrix by mediating glycosylation of proteins in the secretory pathway, such as Dumpy (Dp). The polypeptide is EGF domain-specific O-linked N-acetylglucosamine transferase (Eogt) (Drosophila melanogaster (Fruit fly)).